Consider the following 504-residue polypeptide: ATP synthase subunit beta (504 aa).

Gly-181 to Thr-188 is a binding site for ATP.

This sequence belongs to the ATPase alpha/beta chains family. As to quaternary structure, F-type ATPases have 2 components, CF(1) - the catalytic core - and CF(0) - the membrane proton channel. CF(1) has five subunits: alpha(3), beta(3), gamma(1), delta(1), epsilon(1). CF(0) has three main subunits: a(1), b(2) and c(9-12). The alpha and beta chains form an alternating ring which encloses part of the gamma chain. CF(1) is attached to CF(0) by a central stalk formed by the gamma and epsilon chains, while a peripheral stalk is formed by the delta and b chains.

The protein resides in the cell inner membrane. The enzyme catalyses ATP + H2O + 4 H(+)(in) = ADP + phosphate + 5 H(+)(out). In terms of biological role, produces ATP from ADP in the presence of a proton gradient across the membrane. The catalytic sites are hosted primarily by the beta subunits. This is ATP synthase subunit beta from Ehrlichia ruminantium (strain Welgevonden).